Here is a 311-residue protein sequence, read N- to C-terminus: Phospho-N-acetylmuramoyl-pentapeptide-transferase (311 aa).

Helical transmembrane passes span 2-22 (ENNVIVFFLSFLSSVVFIEGF), 48-68 (GTPTAAGLVFIPIFIAVLLNF), 74-94 (SFLIAFSALSYGLIGAIDDFM), 104-124 (ITAVQKLFMQFTAAFIIVYFI), 144-164 (LGWFYYLLSSVVIVGVSNAVN), 168-188 (GVDGLAGFVFIGSIVPLLIVG), 192-212 (VVYLSLIGLLMGFLWHNWHPA), 214-234 (IFMGDAGSLALGGILATSFAL), 237-257 (LELFLIFFGFIFLLETLSVII), and 288-308 (KIAFRFSTLALLVSLLGIIGW).

This sequence belongs to the glycosyltransferase 4 family. MraY subfamily. Mg(2+) is required as a cofactor.

It localises to the cell inner membrane. It catalyses the reaction UDP-N-acetyl-alpha-D-muramoyl-L-alanyl-gamma-D-glutamyl-meso-2,6-diaminopimeloyl-D-alanyl-D-alanine + di-trans,octa-cis-undecaprenyl phosphate = di-trans,octa-cis-undecaprenyl diphospho-N-acetyl-alpha-D-muramoyl-L-alanyl-D-glutamyl-meso-2,6-diaminopimeloyl-D-alanyl-D-alanine + UMP. The protein operates within cell wall biogenesis; peptidoglycan biosynthesis. Catalyzes the initial step of the lipid cycle reactions in the biosynthesis of the cell wall peptidoglycan: transfers peptidoglycan precursor phospho-MurNAc-pentapeptide from UDP-MurNAc-pentapeptide onto the lipid carrier undecaprenyl phosphate, yielding undecaprenyl-pyrophosphoryl-MurNAc-pentapeptide, known as lipid I. In Kosmotoga olearia (strain ATCC BAA-1733 / DSM 21960 / TBF 19.5.1), this protein is Phospho-N-acetylmuramoyl-pentapeptide-transferase.